Consider the following 198-residue polypeptide: Na(+)-translocating NADH-quinone reductase subunit E (198 aa).

A run of 6 helical transmembrane segments spans residues 11–31 (AVFV…FLAV), 35–55 (VSTA…SVPV), 77–97 (FLNF…LEMI), 110–130 (GIFL…SFMV), 140–160 (VVYG…MAGI), and 176–196 (LGIT…FSGV).

Belongs to the NqrDE/RnfAE family. In terms of assembly, composed of six subunits; NqrA, NqrB, NqrC, NqrD, NqrE and NqrF.

Its subcellular location is the cell inner membrane. The enzyme catalyses a ubiquinone + n Na(+)(in) + NADH + H(+) = a ubiquinol + n Na(+)(out) + NAD(+). NQR complex catalyzes the reduction of ubiquinone-1 to ubiquinol by two successive reactions, coupled with the transport of Na(+) ions from the cytoplasm to the periplasm. NqrA to NqrE are probably involved in the second step, the conversion of ubisemiquinone to ubiquinol. The chain is Na(+)-translocating NADH-quinone reductase subunit E from Serratia proteamaculans (strain 568).